The sequence spans 417 residues: Argininosuccinate synthase (417 aa).

An ATP-binding site is contributed by 8 to 16 (AYSGGLDTS). Residue Tyr87 coordinates L-citrulline. Gly117 is a binding site for ATP. L-aspartate contacts are provided by Thr119, Asn123, and Asp124. Asn123 provides a ligand contact to L-citrulline. Positions 127, 175, 259, and 271 each coordinate L-citrulline.

The protein belongs to the argininosuccinate synthase family. Type 1 subfamily. In terms of assembly, homotetramer.

It localises to the cytoplasm. It catalyses the reaction L-citrulline + L-aspartate + ATP = 2-(N(omega)-L-arginino)succinate + AMP + diphosphate + H(+). The protein operates within amino-acid biosynthesis; L-arginine biosynthesis; L-arginine from L-ornithine and carbamoyl phosphate: step 2/3. The polypeptide is Argininosuccinate synthase (Clavibacter sepedonicus (Clavibacter michiganensis subsp. sepedonicus)).